We begin with the raw amino-acid sequence, 553 residues long: CTP synthase (553 aa).

The amidoligase domain stretch occupies residues 1 to 270 (MTKYVFVTGG…DDLICRELEL (270 aa)). Serine 13 provides a ligand contact to CTP. Residue serine 13 coordinates UTP. Residues 14–19 (SLGKGI) and aspartate 71 contribute to the ATP site. Mg(2+)-binding residues include aspartate 71 and glutamate 144. Residues 151-153 (DIE), 191-196 (KTKPTQ), and lysine 227 contribute to the CTP site. UTP contacts are provided by residues 191–196 (KTKPTQ) and lysine 227. The region spanning 295-547 (TIGMVGKYVE…IKAALIHQDA (253 aa)) is the Glutamine amidotransferase type-1 domain. Glycine 356 contacts L-glutamine. Cysteine 383 functions as the Nucleophile; for glutamine hydrolysis in the catalytic mechanism. Residues 384-387 (LGMQ), glutamate 407, and arginine 473 each bind L-glutamine. Active-site residues include histidine 520 and glutamate 522.

It belongs to the CTP synthase family. In terms of assembly, homotetramer.

The enzyme catalyses UTP + L-glutamine + ATP + H2O = CTP + L-glutamate + ADP + phosphate + 2 H(+). It carries out the reaction L-glutamine + H2O = L-glutamate + NH4(+). The catalysed reaction is UTP + NH4(+) + ATP = CTP + ADP + phosphate + 2 H(+). It participates in pyrimidine metabolism; CTP biosynthesis via de novo pathway; CTP from UDP: step 2/2. Allosterically activated by GTP, when glutamine is the substrate; GTP has no effect on the reaction when ammonia is the substrate. The allosteric effector GTP functions by stabilizing the protein conformation that binds the tetrahedral intermediate(s) formed during glutamine hydrolysis. Inhibited by the product CTP, via allosteric rather than competitive inhibition. In terms of biological role, catalyzes the ATP-dependent amination of UTP to CTP with either L-glutamine or ammonia as the source of nitrogen. Regulates intracellular CTP levels through interactions with the four ribonucleotide triphosphates. The polypeptide is CTP synthase (Polynucleobacter asymbioticus (strain DSM 18221 / CIP 109841 / QLW-P1DMWA-1) (Polynucleobacter necessarius subsp. asymbioticus)).